The primary structure comprises 152 residues: Lipoprotein signal peptidase (152 aa).

The next 2 membrane-spanning stretches (helical) occupy residues 55–75 (NKMW…VFYM) and 85–105 (LGIS…DRVF). Catalysis depends on residues Asp-111 and Asp-129. A helical membrane pass occupies residues 124–144 (VFNIADSALCIGVVLIIIQTV).

This sequence belongs to the peptidase A8 family.

It localises to the cell membrane. The catalysed reaction is Release of signal peptides from bacterial membrane prolipoproteins. Hydrolyzes -Xaa-Yaa-Zaa-|-(S,diacylglyceryl)Cys-, in which Xaa is hydrophobic (preferably Leu), and Yaa (Ala or Ser) and Zaa (Gly or Ala) have small, neutral side chains.. It participates in protein modification; lipoprotein biosynthesis (signal peptide cleavage). This protein specifically catalyzes the removal of signal peptides from prolipoproteins. The polypeptide is Lipoprotein signal peptidase (Bacillus mycoides (strain KBAB4) (Bacillus weihenstephanensis)).